The sequence spans 67 residues: Disintegrin EC3A (67 aa).

The region spanning 1–65 is the Disintegrin domain; that stretch reads NSVHPCCDPV…DCPRNRYKGK (65 aa). Intrachain disulfides connect Cys6-Cys29, Cys20-Cys26, Cys25-Cys50, and Cys38-Cys57. The short motif at 42–44 is the Cell attachment site; atypical (VGD) element; that stretch reads VGD.

The protein belongs to the venom metalloproteinase (M12B) family. P-II subfamily. P-IIe sub-subfamily. In terms of assembly, heterodimer with EC3B; disulfide-linked. In terms of tissue distribution, expressed by the venom gland.

The protein localises to the secreted. Functionally, inhibits adhesion of cells expressing alpha-4/beta-1 (ITGA4/ITGB1) and alpha-4/beta-7 (ITGA4/ITGB7) integrins to the natural ligands vascular cell adhesion molecule 1 (VCAM-1) and mucosal addressin cell adhesion molecule 1 (MADCAM-1). It is also a weaker inhibitor of alpha-5/beta-1 (ITGA5/ITGB1) and alpha-2b/beta-3 (ITGA2B/ITGB3) integrins. The inhibitory activity of EC3 towards alpha-4 integrins is associated with the MLD sequence of EC3B subunit. The ability of EC3 to inhibit ITGA5/ITGB1 resides in both subunits A and B. The polypeptide is Disintegrin EC3A (Echis carinatus (Saw-scaled viper)).